A 422-amino-acid chain; its full sequence is Acylglycerol kinase, mitochondrial (422 aa).

K6 bears the N6-acetyllysine mark. A hydrophobic region spans residues 15–31; that stretch reads TTAGLCLLTWGGHWLYG. The DAGKc domain maps to 58–199; it reads AQVKKATVFL…LDVLQIKGEK (142 aa). The segment at 249–271 is disordered; that stretch reads QASISYTGPTERPPNEPEETPVQ.

This sequence belongs to the AGK family. In terms of assembly, component of the TIM22 complex, which core is composed of TIMM22, associated with TIMM10 (TIMM10A and/or TIMM10B), TIMM9, AGK and TIMM29. Interacts with SMIM26. Mg(2+) is required as a cofactor. Highly expressed in muscle, heart, kidney and brain.

The protein localises to the mitochondrion inner membrane. The protein resides in the mitochondrion intermembrane space. It carries out the reaction a monoacylglycerol + ATP = a monoacyl-sn-glycero-3-phosphate + ADP + H(+). The catalysed reaction is a 1,2-diacyl-sn-glycerol + ATP = a 1,2-diacyl-sn-glycero-3-phosphate + ADP + H(+). The enzyme catalyses an N-acylsphing-4-enine + ATP = an N-acylsphing-4-enine 1-phosphate + ADP + H(+). It catalyses the reaction 1-(9Z-octadecenoyl)-sn-glycerol + ATP = 1-(9Z-octadecenoyl)-sn-glycero-3-phosphate + ADP + H(+). It carries out the reaction 1,2-di-(9Z-octadecenoyl)-sn-glycerol + ATP = 1,2-di-(9Z-octadecenoyl)-sn-glycero-3-phosphate + ADP + H(+). The catalysed reaction is a 1-acyl-sn-glycerol + ATP = a 1-acyl-sn-glycero-3-phosphate + ADP + H(+). The enzyme catalyses 1-hexadecanoyl-sn-glycerol + ATP = 1-hexadecanoyl-sn-glycero-3-phosphate + ADP + H(+). It catalyses the reaction a 2-acylglycerol + ATP = a 2-acyl-sn-glycerol 3-phosphate + ADP + H(+). It carries out the reaction 2-(5Z,8Z,11Z,14Z-eicosatetraenoyl)-glycerol + ATP = 2-(5Z,8Z,11Z,14Z-eicosatetraenoyl)-sn-glycero-3-phosphate + ADP + H(+). The catalysed reaction is 1-(5Z,8Z,11Z,14Z-eicosatetraenoyl)-sn-glycerol + ATP = 1-(5Z,8Z,11Z,14Z-eicosatetraenoyl)-sn-glycero-3-phosphate + ADP + H(+). The enzyme catalyses N-(hexanoyl)sphing-4-enine + ATP = N-hexanoylsphing-4-enine 1-phosphate + ADP + H(+). It participates in lipid metabolism; glycerolipid metabolism. Lipid kinase that can phosphorylate both monoacylglycerol and diacylglycerol to form lysophosphatidic acid (LPA) and phosphatidic acid (PA), respectively. Does not phosphorylate sphingosine. Phosphorylates ceramide. Phosphorylates 1,2-dioleoylglycerol more rapidly than 2,3-dioleoylglycerol. Independently of its lipid kinase activity, acts as a component of the TIM22 complex. The TIM22 complex mediates the import and insertion of multi-pass transmembrane proteins into the mitochondrial inner membrane by forming a twin-pore translocase that uses the membrane potential as the external driving force. In the TIM22 complex, required for the import of a subset of metabolite carriers into mitochondria, such as ANT1/SLC25A4 and SLC25A24, while it is not required for the import of TIMM23. Overexpression increases the formation and secretion of LPA, resulting in transactivation of EGFR and activation of the downstream MAPK signaling pathway, leading to increased cell growth. This is Acylglycerol kinase, mitochondrial from Homo sapiens (Human).